The sequence spans 231 residues: Probable septum site-determining protein MinC (231 aa).

It belongs to the MinC family. In terms of assembly, interacts with MinD and FtsZ.

Its function is as follows. Cell division inhibitor that blocks the formation of polar Z ring septums. Rapidly oscillates between the poles of the cell to destabilize FtsZ filaments that have formed before they mature into polar Z rings. Prevents FtsZ polymerization. This is Probable septum site-determining protein MinC from Bradyrhizobium diazoefficiens (strain JCM 10833 / BCRC 13528 / IAM 13628 / NBRC 14792 / USDA 110).